Consider the following 353-residue polypeptide: N-acetyl-gamma-glutamyl-phosphate reductase (353 aa).

The active site involves cysteine 157.

Belongs to the NAGSA dehydrogenase family. Type 1 subfamily.

The protein resides in the cytoplasm. It catalyses the reaction N-acetyl-L-glutamate 5-semialdehyde + phosphate + NADP(+) = N-acetyl-L-glutamyl 5-phosphate + NADPH + H(+). The protein operates within amino-acid biosynthesis; L-arginine biosynthesis; N(2)-acetyl-L-ornithine from L-glutamate: step 3/4. In terms of biological role, catalyzes the NADPH-dependent reduction of N-acetyl-5-glutamyl phosphate to yield N-acetyl-L-glutamate 5-semialdehyde. The chain is N-acetyl-gamma-glutamyl-phosphate reductase from Bordetella avium (strain 197N).